Here is a 379-residue protein sequence, read N- to C-terminus: ATP-sensitive inward rectifier potassium channel 10 (379 aa).

The Cytoplasmic portion of the chain corresponds to 1 to 61 (MTSVAKVYYS…LKDLWTTFID (61 aa)). A 1,2-dioctanoyl-sn-glycero-3-phospho-(1D-myo-inositol-4,5-bisphosphate)-binding site is contributed by R36. A helical membrane pass occupies residues 62–88 (MQWRYKLLLFSATFAGTWFLFGVVWYL). The Extracellular segment spans residues 89–114 (VAVAHGDLLELGPPANHTPCVVQVHT). A disulfide bond links C108 and C140. The segment at residues 115–131 (LTGAFLFSLESQTTIGY) is an intramembrane region (discontinuously helical; Pore-forming). Residues 128–133 (TIGYGF) carry the Selectivity filter motif. The Extracellular segment spans residues 132 to 140 (GFRYISEEC). A helical transmembrane segment spans residues 141-166 (PLAIVLLIAQLVLTTILEIFITGTFL). At 167 to 379 (AKIARPKKRA…SALSVRISNV (213 aa)) the chain is on the cytoplasmic side. K168, R171, and K173 together coordinate 1,2-dioctanoyl-sn-glycero-3-phospho-(1D-myo-inositol-4,5-bisphosphate). 210–217 (GCQVTGKL) is an ATP binding site.

The protein belongs to the inward rectifier-type potassium channel (TC 1.A.2.1) family. KCNJ10 subfamily. As to quaternary structure, homotetramer. In kidney cells, it forms heteromeric channels with Kir5.1/KCNJ16; this interaction is required for KCNJ16 localization to the basolateral membrane. Interacts with MAGI1, alone and possibly as a heteromer with KCNJ16; this interaction may facilitate KCNJ10/KCNJ16 potassium channel expression at the basolateral membrane in kidney cells. Interacts with PATJ. In terms of tissue distribution, predominantly expressed in the brain, including in glial cells of the cerebellum and forebrain. Expressed at lower levels in the kidney, and other peripheral tissues.

Its subcellular location is the membrane. It localises to the basolateral cell membrane. The catalysed reaction is K(+)(in) = K(+)(out). Channel activity is strongly regulated by variations of cytosolic pH; channels are activated by alkaline and inhibited by acidic pH values. Activated by phosphatidylinositol 4,5 biphosphate (PtdIns(4,5)P2). Inhibited by Ba(2+) and Cs(+). Functionally, may be responsible for potassium buffering action of glial cells in the brain. Inward rectifier potassium channels are characterized by a greater tendency to allow potassium to flow into the cell rather than out of it. Their voltage dependence is regulated by the concentration of extracellular potassium; as external potassium is raised, the voltage range of the channel opening shifts to more positive voltages. The inward rectification is mainly due to the blockage of outward current by internal magnesium. Can be blocked by extracellular barium and cesium. In the kidney, together with KCNJ16, mediates basolateral K(+) recycling in distal tubules; this process is critical for Na(+) reabsorption at the tubules. This Rattus norvegicus (Rat) protein is ATP-sensitive inward rectifier potassium channel 10.